A 384-amino-acid chain; its full sequence is Probable endopolygalacturonase C (384 aa).

A signal peptide spans 1–19 (MVRQLILISSLLAAVAVRA). A propeptide spanning residues 20 to 40 (APADPAHPMVTEAPDVNLVEK) is cleaved from the precursor. Cys-45 and Cys-63 are joined by a disulfide. PbH1 repeat units follow at residues 176 to 207 (STDLTMTDITVDNTDGDTDDLAANTDGFDIGE) and 208 to 229 (STYITITGAEIYNQDDCVAINS). Asp-222 functions as the Proton donor in the catalytic mechanism. Cys-224 and Cys-240 form a disulfide bridge. The active site involves His-244. 2 PbH1 repeats span residues 254-280 (RDDNTVKNVTFYDVNVLKSQQAIRIKT) and 288-310 (VSEVTYHEIAFSDATDYGIVIEQ). N-linked (GlcNAc...) asparagine glycosylation occurs at Asn-261. 2 disulfide bridges follow: Cys-349-Cys-354 and Cys-373-Cys-382.

It belongs to the glycosyl hydrolase 28 family.

Its subcellular location is the secreted. It catalyses the reaction (1,4-alpha-D-galacturonosyl)n+m + H2O = (1,4-alpha-D-galacturonosyl)n + (1,4-alpha-D-galacturonosyl)m.. Its function is as follows. Involved in maceration and soft-rotting of plant tissue. Hydrolyzes the 1,4-alpha glycosidic bonds of de-esterified pectate in the smooth region of the plant cell wall. The sequence is that of Probable endopolygalacturonase C (pgaC) from Aspergillus niger (strain ATCC MYA-4892 / CBS 513.88 / FGSC A1513).